We begin with the raw amino-acid sequence, 57 residues long: Large ribosomal subunit protein eL20 (57 aa).

The protein belongs to the eukaryotic ribosomal protein eL20 family. Part of the 50S ribosomal subunit. Binds 23S rRNA.

The polypeptide is Large ribosomal subunit protein eL20 (Natronomonas pharaonis (strain ATCC 35678 / DSM 2160 / CIP 103997 / JCM 8858 / NBRC 14720 / NCIMB 2260 / Gabara) (Halobacterium pharaonis)).